A 221-amino-acid polypeptide reads, in one-letter code: Ribosomal RNA small subunit methyltransferase G (221 aa).

Residues Gly83, Phe88, 132-133 (LE), and Arg146 each bind S-adenosyl-L-methionine.

Belongs to the methyltransferase superfamily. RNA methyltransferase RsmG family.

Its subcellular location is the cytoplasm. The catalysed reaction is guanosine(527) in 16S rRNA + S-adenosyl-L-methionine = N(7)-methylguanosine(527) in 16S rRNA + S-adenosyl-L-homocysteine. Specifically methylates the N7 position of guanine in position 527 of 16S rRNA. In Zymomonas mobilis subsp. mobilis (strain ATCC 31821 / ZM4 / CP4), this protein is Ribosomal RNA small subunit methyltransferase G.